We begin with the raw amino-acid sequence, 417 residues long: NADH-quinone oxidoreductase subunit D (417 aa).

It belongs to the complex I 49 kDa subunit family. As to quaternary structure, NDH-1 is composed of 14 different subunits. Subunits NuoB, C, D, E, F, and G constitute the peripheral sector of the complex.

It localises to the cell inner membrane. The catalysed reaction is a quinone + NADH + 5 H(+)(in) = a quinol + NAD(+) + 4 H(+)(out). Functionally, NDH-1 shuttles electrons from NADH, via FMN and iron-sulfur (Fe-S) centers, to quinones in the respiratory chain. The immediate electron acceptor for the enzyme in this species is believed to be ubiquinone. Couples the redox reaction to proton translocation (for every two electrons transferred, four hydrogen ions are translocated across the cytoplasmic membrane), and thus conserves the redox energy in a proton gradient. The chain is NADH-quinone oxidoreductase subunit D from Burkholderia vietnamiensis (strain G4 / LMG 22486) (Burkholderia cepacia (strain R1808)).